Consider the following 245-residue polypeptide: tRNA pseudouridine synthase A (245 aa).

Asp52 (nucleophile) is an active-site residue. Tyr111 lines the substrate pocket.

It belongs to the tRNA pseudouridine synthase TruA family. Homodimer.

It catalyses the reaction uridine(38/39/40) in tRNA = pseudouridine(38/39/40) in tRNA. Functionally, formation of pseudouridine at positions 38, 39 and 40 in the anticodon stem and loop of transfer RNAs. The protein is tRNA pseudouridine synthase A of Thermotoga maritima (strain ATCC 43589 / DSM 3109 / JCM 10099 / NBRC 100826 / MSB8).